Here is a 272-residue protein sequence, read N- to C-terminus: MNKQQLFENIQKKKSFLCVGLDTDIKKIPEHLLKEEDPIFAFNKAIIDATAPYCIAYKPNLAFYESMGVKGWIAFEKTVSYIKENYPDQFIIADAKRGDIGNTSAMYARTFFEELDIDSVTVAPYMGEDSVTPFLSYEGKWVILLALTSNKGSHDFQLTEDTNGERLFEKVLRKSQEWANDENMMYVVGATQGRAFEDIRKIVPNHFLLVPGIGAQGGSLEEVCKYGMNSTCGLIVNSSRAIIYADKTENFATVAGQEAQKVQAQMEKIMCQ.

Residue K96 is the Proton donor of the active site.

The protein belongs to the OMP decarboxylase family. Type 2 subfamily.

The catalysed reaction is orotidine 5'-phosphate + H(+) = UMP + CO2. Its pathway is pyrimidine metabolism; UMP biosynthesis via de novo pathway; UMP from orotate: step 2/2. The protein is Orotidine 5'-phosphate decarboxylase of Phocaeicola vulgatus (strain ATCC 8482 / DSM 1447 / JCM 5826 / CCUG 4940 / NBRC 14291 / NCTC 11154) (Bacteroides vulgatus).